Here is a 130-residue protein sequence, read N- to C-terminus: Small ribosomal subunit protein uS11c (130 aa).

It belongs to the universal ribosomal protein uS11 family. As to quaternary structure, part of the 30S ribosomal subunit.

The protein resides in the plastid. It is found in the chloroplast. The polypeptide is Small ribosomal subunit protein uS11c (Guillardia theta (Cryptophyte)).